We begin with the raw amino-acid sequence, 427 residues long: Serine hydroxymethyltransferase (427 aa).

Residues Leu118 and Gly122–Leu124 each bind (6S)-5,6,7,8-tetrahydrofolate. Lys227 bears the N6-(pyridoxal phosphate)lysine mark. A (6S)-5,6,7,8-tetrahydrofolate-binding site is contributed by Ser351–Phe353.

It belongs to the SHMT family. In terms of assembly, homodimer. Pyridoxal 5'-phosphate serves as cofactor.

It is found in the cytoplasm. The enzyme catalyses (6R)-5,10-methylene-5,6,7,8-tetrahydrofolate + glycine + H2O = (6S)-5,6,7,8-tetrahydrofolate + L-serine. It functions in the pathway one-carbon metabolism; tetrahydrofolate interconversion. The protein operates within amino-acid biosynthesis; glycine biosynthesis; glycine from L-serine: step 1/1. Functionally, catalyzes the reversible interconversion of serine and glycine with tetrahydrofolate (THF) serving as the one-carbon carrier. This reaction serves as the major source of one-carbon groups required for the biosynthesis of purines, thymidylate, methionine, and other important biomolecules. Also exhibits THF-independent aldolase activity toward beta-hydroxyamino acids, producing glycine and aldehydes, via a retro-aldol mechanism. This is Serine hydroxymethyltransferase from Thermotoga petrophila (strain ATCC BAA-488 / DSM 13995 / JCM 10881 / RKU-1).